Reading from the N-terminus, the 428-residue chain is Lupus La protein homolog A (428 aa).

Residues 7–99 form the HTH La-type RNA-binding domain; sequence KEQKLDSDTK…RRSPAKPLPE (93 aa). An RRM domain is found at 111–203; it reads KSVYIKGFPT…EERKLNKSEE (93 aa). 2 disordered regions span residues 187–223 and 323–428; these read EYHA…DAER and QESF…VGDQ. 2 short sequence motifs (nuclear localization signal) span residues 196-212 and 316-332; these read RKLN…QVKK and KKIL…RKGR. In terms of domain architecture, xRRM spans 227 to 349; the sequence is EERVGSLLKF…KGRGGKGNDS (123 aa). Composition is skewed to basic residues over residues 328–343 and 352–361; these read KRKG…KGRG and RKRTQFQGKK. Residues 366–377 are compositionally biased toward acidic residues; that stretch reads SSDDEDDMEESE. The segment covering 406 to 428 has biased composition (basic and acidic residues); that stretch reads RSLDDKAEDGPAVKQSKTEVGDQ.

Post-translationally, phosphorylated.

The protein resides in the nucleus. Functionally, la protein plays a role in the transcription of RNA polymerase III. It is most probably a transcription termination factor. Binds to the 3' termini of virtually all nascent polymerase III transcripts. The sequence is that of Lupus La protein homolog A (ssb-a) from Xenopus laevis (African clawed frog).